A 561-amino-acid chain; its full sequence is Putative transport protein ASA_2308 (561 aa).

Helical transmembrane passes span 8–28, 37–57, 66–86, 90–110, and 161–181; these read LLHQ…LLLG, IGNT…GFEF, FMLF…SVFL, IHYI…TVGL, and NMGI…MLVV. RCK C-terminal domains lie at 206 to 291 and 293 to 376; these read SDNE…NYRN and KEVF…KIGF. Transmembrane regions (helical) follow at residues 386-406, 409-429, 450-470, 476-496, and 541-561; these read LVAF…SLVF, LEFG…MGYL, LGLA…ILDH, AVVL…GYLF, and TYAV…GFWF.

Belongs to the AAE transporter (TC 2.A.81) family. YbjL subfamily.

It localises to the cell membrane. The polypeptide is Putative transport protein ASA_2308 (Aeromonas salmonicida (strain A449)).